The following is a 274-amino-acid chain: Hydroxyethylthiazole kinase (274 aa).

Residue Met51 participates in substrate binding. ATP is bound by residues Arg127 and Ser173. Substrate is bound at residue Gly200.

The protein belongs to the Thz kinase family. Mg(2+) is required as a cofactor.

The enzyme catalyses 5-(2-hydroxyethyl)-4-methylthiazole + ATP = 4-methyl-5-(2-phosphooxyethyl)-thiazole + ADP + H(+). Its pathway is cofactor biosynthesis; thiamine diphosphate biosynthesis; 4-methyl-5-(2-phosphoethyl)-thiazole from 5-(2-hydroxyethyl)-4-methylthiazole: step 1/1. In terms of biological role, catalyzes the phosphorylation of the hydroxyl group of 4-methyl-5-beta-hydroxyethylthiazole (THZ). The protein is Hydroxyethylthiazole kinase of Photobacterium profundum (strain SS9).